Here is an 80-residue protein sequence, read N- to C-terminus: Exodeoxyribonuclease 7 small subunit (80 aa).

The protein belongs to the XseB family. In terms of assembly, heterooligomer composed of large and small subunits.

Its subcellular location is the cytoplasm. The catalysed reaction is Exonucleolytic cleavage in either 5'- to 3'- or 3'- to 5'-direction to yield nucleoside 5'-phosphates.. Bidirectionally degrades single-stranded DNA into large acid-insoluble oligonucleotides, which are then degraded further into small acid-soluble oligonucleotides. The protein is Exodeoxyribonuclease 7 small subunit of Pseudomonas putida (strain GB-1).